The sequence spans 53 residues: Conotoxin Bu27 (53 aa).

Positions 1 to 12 (ASDGRNAVVHER) are excised as a propeptide. The residue at position 14 (Pro-14) is a 4-hydroxyproline. Position 15 is a 4-carboxyglutamate (Glu-15). 2 O-linked (HexNAc...) threonine glycosylation sites follow: Thr-19 and Thr-21. A 4-hydroxyproline mark is found at Pro-29, Pro-34, Pro-35, Pro-43, Pro-44, and Pro-48. Pro-48 carries the proline amide modification. The propeptide occupies 49–53 (GRRND).

Belongs to the conotoxin A superfamily. Post-translationally, contains 3 disulfide bonds. Expressed by the venom duct.

The protein localises to the secreted. Functionally, probable neurotoxin with ion channel inhibitor activity. The protein is Conotoxin Bu27 of Conus bullatus (Bubble cone).